A 135-amino-acid polypeptide reads, in one-letter code: Retinol-binding protein 1 (135 aa).

An Omega-N-methylarginine modification is found at W9. The important for interaction with STRA6 stretch occupies residues 22–32 (RALDVNVALRK). K41, M63, and Q109 together coordinate all-trans-retinol.

This sequence belongs to the calycin superfamily. Fatty-acid binding protein (FABP) family. As to quaternary structure, interacts (only as retinol-free apoprotein) with STRA6. In terms of tissue distribution, detected in nearly all the tissues with higher expression in adult ovary, pancreas, pituitary gland and adrenal gland, and fetal liver.

The protein localises to the cytoplasm. It localises to the lipid droplet. Functionally, cytoplasmic retinol-binding protein. Accepts retinol from the transport protein STRA6, and thereby contributes to retinol uptake, storage and retinoid homeostasis. The chain is Retinol-binding protein 1 (RBP1) from Homo sapiens (Human).